Reading from the N-terminus, the 371-residue chain is uncharacterized protein (371 aa).

This sequence belongs to the Gfo/Idh/MocA family.

This is an uncharacterized protein from Synechocystis sp. (strain ATCC 27184 / PCC 6803 / Kazusa).